The chain runs to 274 residues: Exosome complex component RRP40 (274 aa).

Ala2 carries the N-acetylalanine modification. Residue Lys150 forms a Glycyl lysine isopeptide (Lys-Gly) (interchain with G-Cter in SUMO2) linkage.

The protein belongs to the RRP40 family. As to quaternary structure, component of the RNA exosome core complex (Exo-9), composed of EXOSC1, EXOSC2, EXOSC3, EXOSC4, EXOSC5, EXOSC6, EXOSC7, EXOSC8 and EXOSC9; within the complex interacts with EXOSC5 and EXOSC9. The catalytically inactive RNA exosome core complex (Exo-9) associates with the catalytic subunit EXOSC10/RRP6. Exo-9 may associate with DIS3 to form the nucleolar exosome complex, or DIS3L to form the cytoplasmic exosome complex. Exo-9 is formed by a hexameric base ring consisting of the heterodimers EXOSC4-EXOSC9, EXOSC5-EXOSC8 and EXOSC6-EXOSC7, and a cap ring consisting of EXOSC1, EXOSC2 and EXOSC3. The RNA exosome complex associates with cofactors C1D/RRP47, MPHOSPH6/MPP6 and MTREX/MTR4. Interacts with MPHOSPH6/MPP6; the interaction is direct. Interacts with GTPBP1. Interacts with ZC3HAV1. Interacts with DDX17 only in the presence of ZC3HAV1 in an RNA-independent manner. Interacts with DHX36; this interaction occurs in a RNase-insensitive manner. Interacts with HBS1L isoform 2.

The protein localises to the cytoplasm. It is found in the nucleus. Its subcellular location is the nucleolus. In terms of biological role, non-catalytic component of the RNA exosome complex which has 3'-&gt;5' exoribonuclease activity and participates in a multitude of cellular RNA processing and degradation events. In the nucleus, the RNA exosome complex is involved in proper maturation of stable RNA species such as rRNA, snRNA and snoRNA, in the elimination of RNA processing by-products and non-coding 'pervasive' transcripts, such as antisense RNA species and promoter-upstream transcripts (PROMPTs), and of mRNAs with processing defects, thereby limiting or excluding their export to the cytoplasm. The RNA exosome may be involved in Ig class switch recombination (CSR) and/or Ig variable region somatic hypermutation (SHM) by targeting AICDA deamination activity to transcribed dsDNA substrates. In the cytoplasm, the RNA exosome complex is involved in general mRNA turnover and specifically degrades inherently unstable mRNAs containing AU-rich elements (AREs) within their 3' untranslated regions, and in RNA surveillance pathways, preventing translation of aberrant mRNAs. It seems to be involved in degradation of histone mRNA. The catalytic inactive RNA exosome core complex of 9 subunits (Exo-9) is proposed to play a pivotal role in the binding and presentation of RNA for ribonucleolysis, and to serve as a scaffold for the association with catalytic subunits and accessory proteins or complexes. EXOSC3 as peripheral part of the Exo-9 complex stabilizes the hexameric ring of RNase PH-domain subunits through contacts with EXOSC9 and EXOSC5. This chain is Exosome complex component RRP40 (Exosc3), found in Mus musculus (Mouse).